We begin with the raw amino-acid sequence, 1063 residues long: E3 ubiquitin-protein ligase PDZRN3 (1063 aa).

An RING-type; degenerate zinc finger spans residues 18-56; that stretch reads CALCHKVLEDPLTTPCGHVFCAGCVLPWVVQEGSCPARC. Residues 100–158 form a TRAF-type zinc finger; it reads EHLERCDFAPARCRHAGCGQLLLRRDVEAHMRDACDARPVGRCQEGCGLPLTHGEQRAG. PDZ domains follow at residues 249-339 and 419-503; these read TLVL…LRRT and EVGL…IARP. Ser427 is subject to Phosphoserine. Residues 545-602 are disordered; it reads QKKHEEDGGTTDTATILSNQHEKDSGVGRTDESTRNDESSEQENNGEDATASANPLAG. Polar residues predominate over residues 554–563; that stretch reads TTDTATILSN. Residues 564–582 show a composition bias toward basic and acidic residues; sequence QHEKDSGVGRTDESTRNDE. Residues 680 to 705 adopt a coiled-coil conformation; sequence ESVDKELELLNEELRSIELECLSIVR. A compositionally biased stretch (basic and acidic residues) spans 746–755; the sequence is ELPEKSDKDS. Disordered regions lie at residues 746–798 and 834–853; these read ELPE…IEAY and IKERRGSDGSRSPTASPKLG. Residues 756–770 show a composition bias toward polar residues; sequence SSAYNTGESCRSTPL.

As to quaternary structure, interacts with NLGN1 and EFNB2. Interacts with UBE2D2 and with MUSK via the first PDZ domain. In myotubes, the interaction between PDZRN3 and MUSK is enhanced upon agrin stimulation. Post-translationally, auto-ubiquitinated. As to expression, highly expressed in skeletal and cardiac muscle and at lower levels in spinal cord and brain (at protein level). Also expressed in kidney and lung. In muscles, concentrated at the neuromuscular junction (NMJ).

The protein localises to the synapse. The protein resides in the cytoplasm. The catalysed reaction is S-ubiquitinyl-[E2 ubiquitin-conjugating enzyme]-L-cysteine + [acceptor protein]-L-lysine = [E2 ubiquitin-conjugating enzyme]-L-cysteine + N(6)-ubiquitinyl-[acceptor protein]-L-lysine.. It functions in the pathway protein modification; protein ubiquitination. E3 ubiquitin-protein ligase. Plays an important role in regulating the surface level of MUSK on myotubes. Mediates the ubiquitination of MUSK, promoting its endocytosis and lysosomal degradation. Might contribute to terminal myogenic differentiation. This Mus musculus (Mouse) protein is E3 ubiquitin-protein ligase PDZRN3 (Pdzrn3).